We begin with the raw amino-acid sequence, 238 residues long: Ribonuclease PH (238 aa).

Residues arginine 86 and 124 to 126 (GTR) contribute to the phosphate site.

The protein belongs to the RNase PH family. As to quaternary structure, homohexameric ring arranged as a trimer of dimers.

The catalysed reaction is tRNA(n+1) + phosphate = tRNA(n) + a ribonucleoside 5'-diphosphate. Functionally, phosphorolytic 3'-5' exoribonuclease that plays an important role in tRNA 3'-end maturation. Removes nucleotide residues following the 3'-CCA terminus of tRNAs; can also add nucleotides to the ends of RNA molecules by using nucleoside diphosphates as substrates, but this may not be physiologically important. Probably plays a role in initiation of 16S rRNA degradation (leading to ribosome degradation) during starvation. This is Ribonuclease PH from Salmonella choleraesuis (strain SC-B67).